The chain runs to 927 residues: Autophagy-related protein 13 (927 aa).

Disordered stretches follow at residues Met-1–Asp-66, Ser-334–Pro-359, Leu-388–Gly-559, Thr-628–Glu-716, and Gln-786–Trp-927. The segment covering Pro-14–Arg-30 has biased composition (polar residues). 3 stretches are compositionally biased toward polar residues: residues Gln-393–Pro-402, Pro-513–Phe-523, and Gly-544–Gln-557. A compositionally biased stretch (low complexity) spans Ser-630–Ser-671. Residues Leu-684–Glu-716 are compositionally biased toward polar residues. Residues Ser-793–Pro-803 are compositionally biased toward basic and acidic residues. Polar residues predominate over residues His-850–Arg-868. Basic and acidic residues predominate over residues Pro-891–Arg-901.

Belongs to the ATG13 family. Fungi subfamily. Hypophosphorylated form interacts with ATG1 to form the ATG1-ATG13 kinase complex. The ATG1-ATG13 complex interacts with the ATG17-ATG29-ATG31 complex through direct interaction with ATG17.

The protein localises to the cytoplasm. It localises to the preautophagosomal structure. Functionally, activates the ATG1 kinase in a nutritional condition dependent manner through the TOR pathway, leading to autophagy. Involved in ATG9 and ATG23 cycling through the pre-autophagosomal structure. Also involved in cytoplasm to vacuole transport (Cvt) and more specifically in Cvt vesicle formation. Seems to play a role in the switching machinery regulating the conversion between the Cvt pathway and autophagy. Finally, ATG13 is also required for glycogen storage during stationary phase. Autophagy is required for proper vegetative growth, asexual/sexual reproduction, and full virulence. Autophagy is particularly involved in the biosynthesis of deoxynivalenol (DON), an important virulence determinant. This Gibberella zeae (strain ATCC MYA-4620 / CBS 123657 / FGSC 9075 / NRRL 31084 / PH-1) (Wheat head blight fungus) protein is Autophagy-related protein 13.